A 416-amino-acid chain; its full sequence is Gamma-glutamyl phosphate reductase (416 aa).

Belongs to the gamma-glutamyl phosphate reductase family.

Its subcellular location is the cytoplasm. The enzyme catalyses L-glutamate 5-semialdehyde + phosphate + NADP(+) = L-glutamyl 5-phosphate + NADPH + H(+). The protein operates within amino-acid biosynthesis; L-proline biosynthesis; L-glutamate 5-semialdehyde from L-glutamate: step 2/2. Catalyzes the NADPH-dependent reduction of L-glutamate 5-phosphate into L-glutamate 5-semialdehyde and phosphate. The product spontaneously undergoes cyclization to form 1-pyrroline-5-carboxylate. In Glaesserella parasuis serovar 5 (strain SH0165) (Haemophilus parasuis), this protein is Gamma-glutamyl phosphate reductase.